A 730-amino-acid chain; its full sequence is Dual function macrocyclase-peptidase POPB (730 aa).

Catalysis depends on charge relay system residues S577, D661, and H698.

This sequence belongs to the peptidase S9A family. As to quaternary structure, monomer. In terms of tissue distribution, expressed in the pileus (cap) and lamellae where it colocalizes with amanitin.

It carries out the reaction Hydrolysis of Pro-|-Xaa &gt;&gt; Ala-|-Xaa in oligopeptides.. Functionally, dual function macrocyclase-peptidase involved in the biosynthesis of the highly toxic amanitin toxin family of macrocycles. Cleaves peptide bonds on the C-terminal side of prolyl residues. The enzyme first removes 10 residues from the N-terminus of a 35-residue substrate. Conformational trapping of the 25 amino-acid peptide forces the enzyme to release this intermediate rather than proceed to macrocyclization. The enzyme rebinds the 25 amino-acid peptide in a different conformation and catalyzes macrocyclization of the N-terminal eight residues. The chain is Dual function macrocyclase-peptidase POPB from Amanita bisporigera (Destroying angel).